Reading from the N-terminus, the 450-residue chain is Bifunctional apoptosis regulator (450 aa).

The interval 1–24 (MEEPQKNDLSMRGQEEDHPVRSSG) is disordered. At 1–140 (MEEPQKNDLS…PSTGRVNQQR (140 aa)) the chain is on the cytoplasmic side. An RING-type zinc finger spans residues 34-74 (CHCCYDTLVNPTTLNCGHSFCRHCLALWWMSSKKTECPECR). The helical transmembrane segment at 141-161 (GGGFFSGVLTALTGVAVILLV) threads the bilayer. Residues 162-331 (YHWRSRESEH…REPTWKQWRE (170 aa)) lie on the Extracellular side of the membrane. In terms of domain architecture, SAM spans 182–249 (WTTEEVVLWL…LMELERVRAL (68 aa)). Asn-232 is a glycosylation site (N-linked (GlcNAc...) asparagine). A helical membrane pass occupies residues 332 to 352 (FLIKYSFLPYQLIAEFAWDWL). Over 353-360 (EVHYWTSR) the chain is Cytoplasmic. The chain crosses the membrane as a helical span at residues 361–381 (FLIVNAMLLSVLELFSFWRIW). Topologically, residues 382–404 (SRSELKTVPQRMWSHFWKVSTQG) are extracellular. A helical membrane pass occupies residues 405-425 (LFMAMFWPLIPQFVCNCLFYW). The Cytoplasmic segment spans residues 426 to 450 (ALYFNPIINIDLVVKEIRRLETQVF).

In terms of assembly, interacts with CASP8, BCL2 and BCL2L1 through SAM domain and also with HIP1, IFT57, ESRRBL1 and BCAP31. Interacts with NGFR; this interaction inhibits NF-kappa-B and JNK-related signaling pathways. In terms of processing, mediates RING-dependent self-ubiquitination leading to proteasomal degradation.

The protein localises to the endoplasmic reticulum membrane. It carries out the reaction S-ubiquitinyl-[E2 ubiquitin-conjugating enzyme]-L-cysteine + [acceptor protein]-L-lysine = [E2 ubiquitin-conjugating enzyme]-L-cysteine + N(6)-ubiquitinyl-[acceptor protein]-L-lysine.. Functionally, membrane-bound E3 ubiquitin ligase that plays a role in several processes including apoptosis regulation or reticulum endoplasmic stress. Has anti-apoptotic activity, both for apoptosis triggered via death-receptors and via mitochondrial factors. Contributes to the dynamic control of IRE1/ERN1 signaling during ER stress by inducing BAX inhibitor 1/TMBIM6 proteasomal degradation. Promotes the activation of TGF-beta signaling by mediating the 'Lys-63'-linked ubiquitination of TGFBR1 which is critical to activate the pathway. Together with NGFR, negatively regulates NF-kappa-B and JNK-related signaling pathways. Promotes the proteasome-mediated degradation of PNPLA3, a protein involveld in lipid metabolism. This Rattus norvegicus (Rat) protein is Bifunctional apoptosis regulator (Bfar).